Reading from the N-terminus, the 285-residue chain is Transcription factor MYB15 (285 aa).

HTH myb-type domains follow at residues 9-61 (KMGL…MNYL) and 62-116 (KPDI…KKRL). 2 DNA-binding regions (H-T-H motif) span residues 37–61 (WRALPKQAGLLRCGKSCRLRWMNYL) and 89–112 (WSAIAAKLPGRTDNEIKNVWHTHL). The interval 115–172 (RLEDYQPAKPKTSNKKKGTKPKSESVITSSNSTRSESELADSSNPSGESLFSTSPSTS) is disordered. The segment covering 139–158 (SVITSSNSTRSESELADSSN) has biased composition (polar residues). Residues 159–172 (PSGESLFSTSPSTS) are compositionally biased toward low complexity.

In terms of assembly, interacts with SCRM/ICE1. Expressed in roots, leaves, stems and flowers. Expressed in stomatal guard cells.

The protein resides in the nucleus. Transcription factor involved in cold-regulation of CBF genes and in the development of freezing tolerance. May be part of a complex network of transcription factors controlling the expression of CBF genes and other genes in response to cold stress. Binds to the MYB recognition sequences in the promoters of CBF1, CBF2 and CBF3 genes. Involved in drought and salt tolerance. May enhance expression levels of genes involved in abscisic acid (ABA) biosynthesis and signaling, as well as those encoding stress-protective proteins. The protein is Transcription factor MYB15 of Arabidopsis thaliana (Mouse-ear cress).